Reading from the N-terminus, the 132-residue chain is Large ribosomal subunit protein bL19 (132 aa).

The protein belongs to the bacterial ribosomal protein bL19 family.

This protein is located at the 30S-50S ribosomal subunit interface and may play a role in the structure and function of the aminoacyl-tRNA binding site. This is Large ribosomal subunit protein bL19 from Rhodospirillum centenum (strain ATCC 51521 / SW).